We begin with the raw amino-acid sequence, 363 residues long: NAD(P)H-quinone oxidoreductase subunit 1, chloroplastic (363 aa).

The next 6 membrane-spanning stretches (helical) occupy residues 26 to 46 (IIWVLIPIFTPVLGITIGVLV), 98 to 118 (FSIGPSIAVISILLSYLVIPF), 127 to 147 (LSIGVFLWIAISSIAPVGLLM), 253 to 273 (FGLFYVASYLNLLVSSLFVTV), 300 to 320 (VFGTIIGIFITLAKTYLFLFI), and 336 to 356 (LLNLGWKFLLPISLGNLLLTT).

Belongs to the complex I subunit 1 family. In terms of assembly, NDH is composed of at least 16 different subunits, 5 of which are encoded in the nucleus.

The protein resides in the plastid. It localises to the chloroplast thylakoid membrane. It catalyses the reaction a plastoquinone + NADH + (n+1) H(+)(in) = a plastoquinol + NAD(+) + n H(+)(out). It carries out the reaction a plastoquinone + NADPH + (n+1) H(+)(in) = a plastoquinol + NADP(+) + n H(+)(out). Its function is as follows. NDH shuttles electrons from NAD(P)H:plastoquinone, via FMN and iron-sulfur (Fe-S) centers, to quinones in the photosynthetic chain and possibly in a chloroplast respiratory chain. The immediate electron acceptor for the enzyme in this species is believed to be plastoquinone. Couples the redox reaction to proton translocation, and thus conserves the redox energy in a proton gradient. This chain is NAD(P)H-quinone oxidoreductase subunit 1, chloroplastic, found in Helianthus annuus (Common sunflower).